Here is a 394-residue protein sequence, read N- to C-terminus: Na(+)/H(+) antiporter NhaA (394 aa).

The next 11 membrane-spanning stretches (helical) occupy residues 14–34, 59–79, 95–115, 125–145, 154–174, 179–199, 213–233, 254–274, 292–312, 328–348, and 363–383; these read AGGL…NSAL, LLLW…GLEV, VFPA…YLLF, GWAI…ALLG, VFLL…IALF, VSLQ…YMNW, LVLW…GVIV, GLHP…NAGV, IATG…WLAV, IFAV…IASL, and LGIL…LRLV.

It belongs to the NhaA Na(+)/H(+) (TC 2.A.33) antiporter family.

It localises to the cell inner membrane. It carries out the reaction Na(+)(in) + 2 H(+)(out) = Na(+)(out) + 2 H(+)(in). Its function is as follows. Na(+)/H(+) antiporter that extrudes sodium in exchange for external protons. This Yersinia pestis bv. Antiqua (strain Antiqua) protein is Na(+)/H(+) antiporter NhaA.